The chain runs to 103 residues: Small ribosomal subunit protein uS10 (103 aa).

Belongs to the universal ribosomal protein uS10 family. In terms of assembly, part of the 30S ribosomal subunit.

In terms of biological role, involved in the binding of tRNA to the ribosomes. The sequence is that of Small ribosomal subunit protein uS10 from Desulfatibacillum aliphaticivorans.